We begin with the raw amino-acid sequence, 734 residues long: Amino-acid acetyltransferase, mitochondrial (734 aa).

A disordered region spans residues 384-433 (YSETSSRSTRAEADSNFNLRDDIPLSSFTEQKSGELEYSPRHQNDSPTQQ). 2 stretches are compositionally biased toward basic and acidic residues: residues 392 to 406 (TRAE…RDDI) and 415 to 427 (KSGE…RHQN). The N-acetyltransferase domain maps to 555-724 (GVPQISLTDP…YEAVCKTIEP (170 aa)).

The protein belongs to the acetyltransferase family.

Its subcellular location is the mitochondrion. The catalysed reaction is L-glutamate + acetyl-CoA = N-acetyl-L-glutamate + CoA + H(+). Its pathway is amino-acid biosynthesis; L-arginine biosynthesis; N(2)-acetyl-L-ornithine from L-glutamate: step 1/4. N-acetylglutamate synthase involved in arginine biosynthesis. The chain is Amino-acid acetyltransferase, mitochondrial (arg2) from Botryotinia fuckeliana (strain B05.10) (Noble rot fungus).